Here is a 543-residue protein sequence, read N- to C-terminus: Glutamyl-tRNA(Gln) amidotransferase subunit A, chloroplastic/mitochondrial (543 aa).

Active-site charge relay system residues include lysine 123 and serine 198. The active-site Acyl-ester intermediate is the serine 222.

This sequence belongs to the amidase family. GatA subfamily. Subunit of the heterotrimeric GatCAB amidotransferase (AdT) complex, composed of A, B and C subunits.

It is found in the mitochondrion. The protein localises to the plastid. Its subcellular location is the chloroplast stroma. The catalysed reaction is L-glutamyl-tRNA(Gln) + L-glutamine + ATP + H2O = L-glutaminyl-tRNA(Gln) + L-glutamate + ADP + phosphate + H(+). Allows the formation of correctly charged Gln-tRNA(Gln) through the transamidation of misacylated Glu-tRNA(Gln) in chloroplasts and mitochondria. The reaction takes place in the presence of glutamine and ATP through an activated gamma-phospho-Glu-tRNA(Gln). This Oryza sativa subsp. indica (Rice) protein is Glutamyl-tRNA(Gln) amidotransferase subunit A, chloroplastic/mitochondrial.